The following is a 505-amino-acid chain: Poxin-Schlafen (505 aa).

Residues 1–238 form a poxin-like region; the sequence is MAMFYAHAFG…SKEERVDYVL (238 aa). Histidine 17 functions as the Proton donor in the catalytic mechanism. Tyrosine 138 acts as the Shared with catalytic histidine of dimeric partner in catalysis. Catalysis depends on lysine 142, which acts as the Proton acceptor; shared with catalytic histidine of dimeric partner. Residues 239-505 form a schlafen-like region; the sequence is MKRLESIRHL…PDEWVSHIKF (267 aa).

It in the N-terminal section; belongs to the poxin family. The protein in the C-terminal section; belongs to the Schlafen protein family. Subgroup poxviridae B3 subfamily. As to quaternary structure, homodimer.

It catalyses the reaction 2',3'-cGAMP + H2O = Gp(2'-5')Ap(3') + H(+). Its function is as follows. Nuclease that is responsible for viral evasion of host cGAS-STING innate immunity. Cleaves 2',3'-cGAMP which is produced by host cGAS following recognition of cytosolic DNA and blocks the subsequent 2',3'-cGAMP-mediated activation of TMEM173/STING, which normally spreads to adjacent cells and activates the interferon and NF-kappa-B immune responses. The polypeptide is Poxin-Schlafen (OPG188) (Bos taurus (Bovine)).